Consider the following 275-residue polypeptide: Large ribosomal subunit protein uL2 (275 aa).

The interval 222-275 is disordered; it reads GKVMNPVDHPHGGGEGRNPIGRNPSTPWGKLAMGVKTRGNKKSDRLIVKRRNKK.

The protein belongs to the universal ribosomal protein uL2 family. In terms of assembly, part of the 50S ribosomal subunit. Forms a bridge to the 30S subunit in the 70S ribosome.

Its function is as follows. One of the primary rRNA binding proteins. Required for association of the 30S and 50S subunits to form the 70S ribosome, for tRNA binding and peptide bond formation. It has been suggested to have peptidyltransferase activity; this is somewhat controversial. Makes several contacts with the 16S rRNA in the 70S ribosome. This is Large ribosomal subunit protein uL2 from Desulforamulus reducens (strain ATCC BAA-1160 / DSM 100696 / MI-1) (Desulfotomaculum reducens).